Consider the following 591-residue polypeptide: L-fucose isomerase (591 aa).

Active-site proton acceptor residues include Glu337 and Asp361. Mn(2+)-binding residues include Glu337, Asp361, and His528.

It belongs to the L-fucose isomerase family. As to quaternary structure, homohexamer. Mn(2+) serves as cofactor.

It is found in the cytoplasm. It catalyses the reaction L-fucose = L-fuculose. It participates in carbohydrate degradation; L-fucose degradation; L-lactaldehyde and glycerone phosphate from L-fucose: step 1/3. Its function is as follows. Converts the aldose L-fucose into the corresponding ketose L-fuculose. The polypeptide is L-fucose isomerase (Escherichia coli O6:H1 (strain CFT073 / ATCC 700928 / UPEC)).